The following is a 152-amino-acid chain: Em-like protein GEA1 (152 aa).

Composition is skewed to basic and acidic residues over residues 1–17 (MASK…KAKQ) and 32–63 (EAQE…IGHK). The interval 1 to 63 (MASKQLSREE…HEGYQEIGHK (63 aa)) is disordered. Tandem repeats lie at residues 44-63 (GGQT…IGHK), 64-83 (GGEA…MGHK), 84-103 (GGEA…MGHK), and 104-123 (GGEA…MGRK). The tract at residues 44 to 123 (GGQTRKEQLG…HEGYKEMGRK (80 aa)) is 4 X 20 AA tandem repeats. A disordered region spans residues 116–152 (GYKEMGRKGGLSTMEKSGGERAEEEGIEIDESKFTNK).

Belongs to the small hydrophilic plant seed protein family. In seeds only. Specifically located to vascular bundles in the cotyledon and axis of the dry seed. Also found in the epiderm and outer layers of the cortex in the embryo axis.

It is thought to provide protection for the cytoplasm during the desiccation stage of embryo development. The chain is Em-like protein GEA1 (EM1) from Arabidopsis thaliana (Mouse-ear cress).